The sequence spans 343 residues: 2-deoxy-scyllo-inosamine dehydrogenase (343 aa).

Positions 37, 59, 91, 94, 97, 105, and 146 each coordinate Zn(2+).

It belongs to the zinc-containing alcohol dehydrogenase family. DOIA dehydrogenase subfamily. Zn(2+) is required as a cofactor.

The catalysed reaction is 2-deoxy-scyllo-inosamine + NADP(+) = 3-amino-2,3-dideoxy-scyllo-inosose + NADPH + H(+). It carries out the reaction 2-deoxy-scyllo-inosamine + NAD(+) = 3-amino-2,3-dideoxy-scyllo-inosose + NADH + H(+). It participates in metabolic intermediate biosynthesis; 2-deoxystreptamine biosynthesis; 2-deoxystreptamine from D-glucose 6-phosphate: step 3/4. The protein operates within antibiotic biosynthesis; kanamycin biosynthesis. In terms of biological role, catalyzes the oxidation of 2-deoxy-scyllo-inosamine (DOIA) with NAD(+) or NADP(+), forming 3-amino-2,3-dideoxy-scyllo-inosose (amino-DOI). The polypeptide is 2-deoxy-scyllo-inosamine dehydrogenase (kanE) (Streptomyces kanamyceticus).